Reading from the N-terminus, the 298-residue chain is tRNA U34 carboxymethyltransferase (298 aa).

Carboxy-S-adenosyl-L-methionine is bound by residues lysine 69, tryptophan 83, lysine 88, glycine 107, 129 to 131, 156 to 157, tyrosine 176, and arginine 291; these read DPS and VE.

This sequence belongs to the class I-like SAM-binding methyltransferase superfamily. CmoB family. In terms of assembly, homotetramer.

The catalysed reaction is carboxy-S-adenosyl-L-methionine + 5-hydroxyuridine(34) in tRNA = 5-carboxymethoxyuridine(34) in tRNA + S-adenosyl-L-homocysteine + H(+). Functionally, catalyzes carboxymethyl transfer from carboxy-S-adenosyl-L-methionine (Cx-SAM) to 5-hydroxyuridine (ho5U) to form 5-carboxymethoxyuridine (cmo5U) at position 34 in tRNAs. The chain is tRNA U34 carboxymethyltransferase from Campylobacter curvus (strain 525.92).